Reading from the N-terminus, the 392-residue chain is Queuine tRNA-ribosyltransferase (392 aa).

Asp-93 (proton acceptor) is an active-site residue. Substrate contacts are provided by residues 93–97 (DSGGY), Asp-147, Gln-189, and Gly-216. The RNA binding stretch occupies residues 247–253 (GVGAPED). Asp-266 acts as the Nucleophile in catalysis. The interval 271–275 (TRVAR) is RNA binding; important for wobble base 34 recognition. Residues Cys-304, Cys-306, Cys-309, and His-335 each coordinate Zn(2+).

The protein belongs to the queuine tRNA-ribosyltransferase family. In terms of assembly, homodimer. Within each dimer, one monomer is responsible for RNA recognition and catalysis, while the other monomer binds to the replacement base PreQ1. Zn(2+) is required as a cofactor.

It catalyses the reaction 7-aminomethyl-7-carbaguanine + guanosine(34) in tRNA = 7-aminomethyl-7-carbaguanosine(34) in tRNA + guanine. It participates in tRNA modification; tRNA-queuosine biosynthesis. Its function is as follows. Catalyzes the base-exchange of a guanine (G) residue with the queuine precursor 7-aminomethyl-7-deazaguanine (PreQ1) at position 34 (anticodon wobble position) in tRNAs with GU(N) anticodons (tRNA-Asp, -Asn, -His and -Tyr). Catalysis occurs through a double-displacement mechanism. The nucleophile active site attacks the C1' of nucleotide 34 to detach the guanine base from the RNA, forming a covalent enzyme-RNA intermediate. The proton acceptor active site deprotonates the incoming PreQ1, allowing a nucleophilic attack on the C1' of the ribose to form the product. After dissociation, two additional enzymatic reactions on the tRNA convert PreQ1 to queuine (Q), resulting in the hypermodified nucleoside queuosine (7-(((4,5-cis-dihydroxy-2-cyclopenten-1-yl)amino)methyl)-7-deazaguanosine). The protein is Queuine tRNA-ribosyltransferase of Dehalococcoides mccartyi (strain ATCC BAA-2266 / KCTC 15142 / 195) (Dehalococcoides ethenogenes (strain 195)).